An 870-amino-acid chain; its full sequence is Ribonucleoside-diphosphate reductase large subunit (870 aa).

In terms of domain architecture, ATP-cone spans 16 to 110 (MYVVKRDGTK…VSNLHKQTSK (95 aa)). Residues 20-21 (KR), 26-32 (ENVSFDK), T71, and D75 contribute to the ATP site. S235 contributes to the GDP binding site. Residues C236 and C463 are joined by a disulfide bond. DTTP is bound by residues 244 to 246 (DSI), K261, R274, and 281 to 282 (RG). N446 serves as a coordination point for GDP. N446 functions as the Proton acceptor in the catalytic mechanism. The active-site Cysteine radical intermediate is C448. Residues E450 and 632–635 (TAST) each bind GDP. Catalysis depends on E450, which acts as the Proton acceptor. The interval 789 to 854 (KPVENNINST…NNNEDDLANY (66 aa)) is disordered. Residues 796 to 811 (NSTTPLKTPTKTPNSS) are compositionally biased toward low complexity. Polar residues predominate over residues 812 to 831 (NRISTSPTNNLTSPIRFNIT). Over residues 832 to 844 (QQQQQQQQQQQQQ) the composition is skewed to low complexity.

This sequence belongs to the ribonucleoside diphosphate reductase large chain family. In terms of assembly, heterodimer of a large and a small subunit.

It is found in the cytoplasm. The catalysed reaction is a 2'-deoxyribonucleoside 5'-diphosphate + [thioredoxin]-disulfide + H2O = a ribonucleoside 5'-diphosphate + [thioredoxin]-dithiol. Under complex allosteric control mediated by deoxynucleoside triphosphates and ATP binding to separate specificity and activation sites on the large subunit. The type of nucleotide bound at the specificity site determines substrate preference. It seems probable that ATP makes the enzyme reduce CDP and UDP, dGTP favors ADP reduction and dTTP favors GDP reduction. Stimulated by ATP and inhibited by dATP binding to the activity site. Functionally, provides the precursors necessary for DNA synthesis. Catalyzes the biosynthesis of deoxyribonucleotides from the corresponding ribonucleotides. This chain is Ribonucleoside-diphosphate reductase large subunit (rnrA), found in Dictyostelium discoideum (Social amoeba).